The sequence spans 345 residues: HTH-type transcriptional regulator reg1 (345 aa).

In terms of domain architecture, HTH lacI-type spans 1–58 (MTTRLADIAAQAGVSEATVSRVLNGKPGVAATTRQSVLAALDVLGYERPVRLRRRSAG). Residues 5-24 (LADIAAQAGVSEATVSRVLN) constitute a DNA-binding region (H-T-H motif).

Its function is as follows. Transcription repressor involved in control of expression of alpha-amylase and chitinase genes and of actinorhodin production. In Streptomyces lividans, this protein is HTH-type transcriptional regulator reg1 (reg1).